The primary structure comprises 163 residues: Transcriptional repressor NrdR (163 aa).

A zinc finger spans residues 3 to 34 (CPFCRHPDSRVVDSRVSDDGSSIRRRRQCPQC). The region spanning 46 to 136 (LTVIKRSGIG…VYQAFESLDD (91 aa)) is the ATP-cone domain.

It belongs to the NrdR family. Requires Zn(2+) as cofactor.

Functionally, negatively regulates transcription of bacterial ribonucleotide reductase nrd genes and operons by binding to NrdR-boxes. The protein is Transcriptional repressor NrdR of Renibacterium salmoninarum (strain ATCC 33209 / DSM 20767 / JCM 11484 / NBRC 15589 / NCIMB 2235).